The primary structure comprises 301 residues: Sulfate adenylyltransferase subunit 2 (301 aa).

It belongs to the PAPS reductase family. CysD subfamily. Heterodimer composed of CysD, the smaller subunit, and CysN.

The catalysed reaction is sulfate + ATP + H(+) = adenosine 5'-phosphosulfate + diphosphate. Its pathway is sulfur metabolism; hydrogen sulfide biosynthesis; sulfite from sulfate: step 1/3. With CysN forms the ATP sulfurylase (ATPS) that catalyzes the adenylation of sulfate producing adenosine 5'-phosphosulfate (APS) and diphosphate, the first enzymatic step in sulfur assimilation pathway. APS synthesis involves the formation of a high-energy phosphoric-sulfuric acid anhydride bond driven by GTP hydrolysis by CysN coupled to ATP hydrolysis by CysD. This Shewanella woodyi (strain ATCC 51908 / MS32) protein is Sulfate adenylyltransferase subunit 2.